The chain runs to 361 residues: Phosphoserine aminotransferase (361 aa).

Arg-43 provides a ligand contact to L-glutamate. Pyridoxal 5'-phosphate contacts are provided by residues 77–78 (AS), Trp-103, Thr-153, Asp-173, and Gln-196. Lys-197 carries the post-translational modification N6-(pyridoxal phosphate)lysine. 238–239 (NT) is a pyridoxal 5'-phosphate binding site.

It belongs to the class-V pyridoxal-phosphate-dependent aminotransferase family. SerC subfamily. Homodimer. Requires pyridoxal 5'-phosphate as cofactor.

The protein resides in the cytoplasm. It carries out the reaction O-phospho-L-serine + 2-oxoglutarate = 3-phosphooxypyruvate + L-glutamate. The catalysed reaction is 4-(phosphooxy)-L-threonine + 2-oxoglutarate = (R)-3-hydroxy-2-oxo-4-phosphooxybutanoate + L-glutamate. It participates in amino-acid biosynthesis; L-serine biosynthesis; L-serine from 3-phospho-D-glycerate: step 2/3. Its pathway is cofactor biosynthesis; pyridoxine 5'-phosphate biosynthesis; pyridoxine 5'-phosphate from D-erythrose 4-phosphate: step 3/5. Catalyzes the reversible conversion of 3-phosphohydroxypyruvate to phosphoserine and of 3-hydroxy-2-oxo-4-phosphonooxybutanoate to phosphohydroxythreonine. The chain is Phosphoserine aminotransferase from Stutzerimonas stutzeri (Pseudomonas stutzeri).